We begin with the raw amino-acid sequence, 368 residues long: H-2 class I histocompatibility antigen, D-P alpha chain (368 aa).

An N-terminal signal peptide occupies residues 1 to 21 (MAPRTLLLLLAAALAPTQTRA). The segment at 22-111 (GPHSLRYFVT…LLGYYNQSKG (90 aa)) is alpha-1. The Extracellular segment spans residues 22–303 (GPHSLRYFVT…RWEPPPSTDS (282 aa)). N107 carries an N-linked (GlcNAc...) asparagine glycan. Residues 112 to 203 (GSHTIQGMRG…ELGNATLLCT (92 aa)) are alpha-2. Residues C122 and C185 are joined by a disulfide bond. N-linked (GlcNAc...) asparagine glycosylation is found at N197 and N277. The interval 204–295 (DPPKAHVTHH…GLPEPLTLRW (92 aa)) is alpha-3. In terms of domain architecture, Ig-like C1-type spans 206 to 294 (PKAHVTHHPR…EGLPEPLTLR (89 aa)). A disulfide bridge links C224 with C280. The connecting peptide stretch occupies residues 296-303 (EPPPSTDS). Residues 304 to 330 (YMVIVAVLVVLGAVFIIGAVVAFVMMM) form a helical membrane-spanning segment. At 331–368 (RRNTGGKGGDYTLAPGSQSSEMSLRDCKVMVHDSHSLA) the chain is on the cytoplasmic side. Phosphoserine is present on residues S350 and S353.

It belongs to the MHC class I family. As to quaternary structure, heterodimer of an alpha chain and a beta chain (beta-2-microglobulin).

Its subcellular location is the membrane. Functionally, involved in the presentation of foreign antigens to the immune system. This is H-2 class I histocompatibility antigen, D-P alpha chain (H2-D1) from Mus musculus (Mouse).